We begin with the raw amino-acid sequence, 179 residues long: Large ribosomal subunit protein uL6 (179 aa).

Belongs to the universal ribosomal protein uL6 family. Part of the 50S ribosomal subunit.

Its function is as follows. This protein binds to the 23S rRNA, and is important in its secondary structure. It is located near the subunit interface in the base of the L7/L12 stalk, and near the tRNA binding site of the peptidyltransferase center. This is Large ribosomal subunit protein uL6 from Clostridium acetobutylicum (strain ATCC 824 / DSM 792 / JCM 1419 / IAM 19013 / LMG 5710 / NBRC 13948 / NRRL B-527 / VKM B-1787 / 2291 / W).